Here is a 145-residue protein sequence, read N- to C-terminus: Natriuretic peptides A (145 aa).

A signal peptide spans 1 to 23 (MGTSFVGYLTFVLLLLALTKVRG). The propeptide occupies 24–117 (GPAYNSPLSS…KLRELLNAPR (94 aa)). The cysteines at positions 125 and 141 are disulfide-linked.

It belongs to the natriuretic peptide family. Cleaved upon secretion to produce the functional hormone.

It is found in the secreted. In terms of biological role, hormone playing a key role in cardiovascular homeostasis through regulation of natriuresis, diuresis, and vasodilation. Has a cGMP-stimulating activity. This Aquarana catesbeiana (American bullfrog) protein is Natriuretic peptides A.